The following is a 229-amino-acid chain: Cytidylate kinase (229 aa).

12–20 (GPSGSGKGT) contributes to the ATP binding site.

The protein belongs to the cytidylate kinase family. Type 1 subfamily.

It localises to the cytoplasm. The enzyme catalyses CMP + ATP = CDP + ADP. It catalyses the reaction dCMP + ATP = dCDP + ADP. The chain is Cytidylate kinase from Pseudomonas fluorescens (strain Pf0-1).